The chain runs to 441 residues: Lysine histidine transporter-like 2 (441 aa).

Over 1-32 the chain is Cytoplasmic; that stretch reads MEKSQSSPTKDASTKQKNVDDWLPITSSRNAK. Residues 33–53 form a helical membrane-spanning segment; sequence WWYSAFHNVTAMVGAGVLSLP. The Extracellular segment spans residues 54 to 58; it reads YAMSN. Residues 59-79 form a helical membrane-spanning segment; it reads LGWGPGVTIMIMSWLITFYTL. The Cytoplasmic portion of the chain corresponds to 80-110; sequence WQMVQMHEMVPGKRFDRYHELGQHAFGEKLG. A helical membrane pass occupies residues 111–131; it reads LWIVVPQQLIVEVGVDIVYMV. Residues 132–155 are Extracellular-facing; the sequence is TGGKSLKKIHDLLCTDCKNIRTTY. The next 2 membrane-spanning stretches (helical) occupy residues 156-176 and 177-197; these read WIMI…FNSI and SIVS…AWAT. Over 198–222 the chain is Extracellular; the sequence is SVKKGVHPNVDYSSRASTTSGNVFN. Residues 223-243 traverse the membrane as a helical segment; that stretch reads FLNALGDVAFAYAGHNVVLEI. At 244 to 264 the chain is on the cytoplasmic side; sequence QATIPSTPEKPSKIAMWKGVV. Residues 265 to 285 traverse the membrane as a helical segment; the sequence is VAYIVVAICYFPVAFVCYYIF. The Extracellular portion of the chain corresponds to 286 to 300; it reads GNSVDDNILMTLEKP. Residues 301–321 form a helical membrane-spanning segment; sequence IWLIAIANAFVVVHVIGSYQI. The Cytoplasmic portion of the chain corresponds to 322–347; the sequence is YAMPVFDMLETFLVKKMMFAPSFKLR. A helical membrane pass occupies residues 348-370; sequence FITRTLYVAFTMFVAICIPFFGG. Topologically, residues 371-373 are extracellular; it reads LLG. The chain crosses the membrane as a helical span at residues 374 to 396; the sequence is FFGGFAFAPTTYYLPCIMWLCIK. Residues 397-406 are Cytoplasmic-facing; the sequence is KPKKYGLSWC. The helical transmembrane segment at 407–427 threads the bilayer; sequence INWFCIVVGVILTILAPIGGL. Residues 428-441 lie on the Extracellular side of the membrane; the sequence is RTIIISAKNYEFFS.

This sequence belongs to the amino acid/polyamine transporter 2 family. Amino acid/auxin permease (AAAP) (TC 2.A.18.2) subfamily.

It localises to the cell membrane. Functionally, amino acid transporter. The chain is Lysine histidine transporter-like 2 from Arabidopsis thaliana (Mouse-ear cress).